Consider the following 224-residue polypeptide: Orotidine 5'-phosphate decarboxylase (224 aa).

Residues Asp-10, Lys-32, 59–68 (DLKLHDIPNT), Thr-115, Arg-175, Gln-184, Gly-204, and Arg-205 contribute to the substrate site. The active-site Proton donor is the Lys-61.

This sequence belongs to the OMP decarboxylase family. Type 1 subfamily. In terms of assembly, homodimer.

It catalyses the reaction orotidine 5'-phosphate + H(+) = UMP + CO2. The protein operates within pyrimidine metabolism; UMP biosynthesis via de novo pathway; UMP from orotate: step 2/2. In terms of biological role, catalyzes the decarboxylation of orotidine 5'-monophosphate (OMP) to uridine 5'-monophosphate (UMP). The polypeptide is Orotidine 5'-phosphate decarboxylase (Erythrobacter litoralis (strain HTCC2594)).